Reading from the N-terminus, the 290-residue chain is CMRF35-like molecule 1 (290 aa).

The N-terminal stretch at 1 to 19 is a signal peptide; sequence MPLLTLYLLLFWLSGYSIV. The region spanning 20 to 126 is the Ig-like V-type domain; it reads TQITGPTTVN…LGVTVQVTID (107 aa). Residues 20–156 are Extracellular-facing; the sequence is TQITGPTTVN…DNRHKLLKLS (137 aa). Intrachain disulfides connect Cys-40–Cys-108 and Cys-54–Cys-62. Asn-88 is a glycosylation site (N-linked (GlcNAc...) asparagine). A helical membrane pass occupies residues 157–177; sequence VLLPLIFTILLLLLVAASLLA. Topologically, residues 178–290 are cytoplasmic; the sequence is WRMMKYQQKA…PTEYSTISRP (113 aa). The tract at residues 267–290 is disordered; sequence GHLSSHLPGRGPEEPTEYSTISRP.

This sequence belongs to the CD300 family. As to quaternary structure, interacts with PTPN6/SHP-1 in a tyrosine phosphorylation dependent manner. Interacts with IL4R. Post-translationally, phosphorylated on tyrosine. Highly expressed in spleen, peripheral blood leukocyte and monocyte, and lung. Weakly expressed in thymus, heart, brain, placenta, liver, skeletal muscle, kidney, pancreas, prostate, testis, ovary, small intestine or colon. Expressed selectively in monocytes and monocyte-related cells.

The protein localises to the cell membrane. Functionally, acts as an inhibitory receptor for myeloid cells and mast cells. Positively regulates the phagocytosis of apoptotic cells (efferocytosis) via phosphatidylserine (PS) recognition; recognizes and binds PS as a ligand which is expressed on the surface of apoptotic cells. Plays an important role in the maintenance of immune homeostasis, by promoting macrophage-mediated efferocytosis and by inhibiting dendritic cell-mediated efferocytosis. Negatively regulates Fc epsilon receptor-dependent mast cell activation and allergic responses via binding to ceramide and sphingomyelin which act as ligands. May act as a coreceptor for interleukin 4 (IL-4). Associates with and regulates IL-4 receptor alpha-mediated responses by augmenting IL-4- and IL-13-induced signaling. Negatively regulates the Toll-like receptor (TLR) signaling mediated by MYD88 and TRIF through activation of PTPN6/SHP-1 and PTPN11/SHP-2. Inhibits osteoclast formation. Induces macrophage cell death upon engagement. This Homo sapiens (Human) protein is CMRF35-like molecule 1 (CD300LF).